The following is a 71-amino-acid chain: Protein CYSTEINE-RICH TRANSMEMBRANE MODULE 8 (71 aa).

Polar residues predominate over residues 1–22; the sequence is MNQSAQNYFSVQKPSETSSGPY. Residues 1-35 are disordered; the sequence is MNQSAQNYFSVQKPSETSSGPYTSPPPIGYPTRDA. The helical transmembrane segment at 48–64 threads the bilayer; it reads NSKGVNPEGCCAAICCC.

It belongs to the CYSTM1 family. As to expression, mostly expressed in stems, siliques, roots and flowers and, to a lower extent, in leaves.

It is found in the membrane. The protein localises to the nucleus. In terms of biological role, involved in resistance to abiotic stress. The polypeptide is Protein CYSTEINE-RICH TRANSMEMBRANE MODULE 8 (Arabidopsis thaliana (Mouse-ear cress)).